The following is a 431-amino-acid chain: Enolase (431 aa).

Residue Gln166 participates in (2R)-2-phosphoglycerate binding. Glu208 serves as the catalytic Proton donor. Mg(2+) is bound by residues Asp245, Glu288, and Asp315. (2R)-2-phosphoglycerate is bound by residues Lys340, Arg369, Ser370, and Lys391. Catalysis depends on Lys340, which acts as the Proton acceptor.

It belongs to the enolase family. Mg(2+) is required as a cofactor.

It is found in the cytoplasm. Its subcellular location is the secreted. It localises to the cell surface. The enzyme catalyses (2R)-2-phosphoglycerate = phosphoenolpyruvate + H2O. It functions in the pathway carbohydrate degradation; glycolysis; pyruvate from D-glyceraldehyde 3-phosphate: step 4/5. Catalyzes the reversible conversion of 2-phosphoglycerate (2-PG) into phosphoenolpyruvate (PEP). It is essential for the degradation of carbohydrates via glycolysis. In Clostridium botulinum (strain 657 / Type Ba4), this protein is Enolase.